The chain runs to 466 residues: MASPLSSSTVVSHRLFFLHPSPLNRKFLFVKPKLPFNRTNSGDFRMRLHSTSSKTGTKELIHSCNSSIDSKLNTFEAGSKNLEKLVATILIFVQVWSPLPLFGLDSAYISPAEAVLYSPDTKVPRTGELALRRAIPANPSMKIIQASLEDISYLLRIPQRKPYGTMESNVKKALKVAIDDKDKILASIPVDLKDKGSELYTTLIDGKGGLQALITSIKKQDPDKVSLGLAASLDTVADLELLQASGLSFLLPQQYLNYPRLAGRGTVEITIEKADGSTFSAEAGGDQRKSATVQIVIDGYSAPLTAGNFAKLVTSGAYDGAKLNTVNQAVITEDGSGKVESVSVPLEVMPSGQFEPLYRTPLSVQDGELPVLPLSVYGAVAMAHSENSEEYSSPYQFFFYLYDKRNSGLGGLSFDEGQFSVFGYTIAGKDILGQIKTGDIIKSAKLIEGQDRLSLPVQNNNINEST.

Residues 1-65 (MASPLSSSTV…GTKELIHSCN (65 aa)) constitute a chloroplast transit peptide. Residues 66 to 114 (SSIDSKLNTFEAGSKNLEKLVATILIFVQVWSPLPLFGLDSAYISPAEA) constitute a thylakoid transit peptide. In terms of domain architecture, PPIase cyclophilin-type spans 278–466 (TFSAEAGGDQ…VQNNNINEST (189 aa)).

Aerial parts.

It localises to the plastid. Its subcellular location is the chloroplast thylakoid lumen. The enzyme catalyses [protein]-peptidylproline (omega=180) = [protein]-peptidylproline (omega=0). In terms of biological role, PPIases accelerate the folding of proteins. It catalyzes the cis-trans isomerization of proline imidic peptide bonds in oligopeptides. The chain is Peptidyl-prolyl cis-trans isomerase CYP37, chloroplastic (CYP37) from Arabidopsis thaliana (Mouse-ear cress).